A 470-amino-acid chain; its full sequence is Acyltransferase BOA11 (470 aa).

The active-site Proton acceptor is histidine 156.

It belongs to the plant acyltransferase family.

The protein operates within polyketide biosynthesis. Functionally, acyltransferase; part of the gene cluster B that mediates the biosynthesis of botcinic acid and its botcinin derivatives, acetate-derived polyketides that contribute to virulence when combined with the sesquiterpene botrydial. Botcinic acid and its derivatives have been shown to induce chlorosis and necrosis during host plant infection, but also have antifungal activities. Two polyketide synthases, BOA6 and BOA9, are involved in the biosynthesis of botcinins. BOA6 mediates the formation of the per-methylated tetraketide core by condensation of four units of malonyl-CoA with one unit of acetyl-CoA, which would be methylated in activated methylene groups to yield a bicyclic acid intermediate that could then either be converted to botrylactone derivatives or lose the starter acetate unit through a retro-Claisen type C-C bond cleavage to yield botcinin derivatives. The second polyketide synthase, BOA9, is probably required for the biosynthesis of the tetraketide side chain of botcinins. The methyltransferase (MT) domain within BOA6 is probably responsible for the incorporation of four methyl groups. The trans-enoyl reductase BOA5 might take over the enoyl reductase function of BOA6 that misses an ER domain. The monooxygenases BOA2, BOA3 and BOA4 might be involved in further hydroxylations at C4, C5 and C8, whereas BOA7, close to BOA9, could potentially be involved in the hydroxylation at C4 in the side chain of botcinins. The protein is Acyltransferase BOA11 of Botryotinia fuckeliana (strain B05.10) (Noble rot fungus).